The sequence spans 292 residues: Elongation factor Ts (292 aa).

The segment at 79-82 is involved in Mg(2+) ion dislocation from EF-Tu; that stretch reads TDFV.

Belongs to the EF-Ts family.

It localises to the cytoplasm. Functionally, associates with the EF-Tu.GDP complex and induces the exchange of GDP to GTP. It remains bound to the aminoacyl-tRNA.EF-Tu.GTP complex up to the GTP hydrolysis stage on the ribosome. This chain is Elongation factor Ts, found in Xanthomonas euvesicatoria pv. vesicatoria (strain 85-10) (Xanthomonas campestris pv. vesicatoria).